Reading from the N-terminus, the 840-residue chain is Homeobox-leucine zipper protein HOX9 (840 aa).

2 disordered regions span residues Met1–Asp26 and Asn135–Asn160. The span at Gly12–Asp21 shows a compositional bias: gly residues. Positions Asp26–Lys89 form a DNA-binding region, homeobox. Residues Lys86 to Asn135 are a coiled coil. The region spanning Asp157–Val385 is the START domain.

Belongs to the HD-ZIP homeobox family. Class III subfamily. In terms of tissue distribution, expressed in seedlings, roots, stems, leaf sheaths and blades and panicles.

Its subcellular location is the nucleus. Its function is as follows. Probable transcription factor. This is Homeobox-leucine zipper protein HOX9 (HOX9) from Oryza sativa subsp. indica (Rice).